Consider the following 698-residue polypeptide: Superoxide-generating NADPH oxidase heavy chain subunit B (698 aa).

Disordered regions lie at residues 1–68 (MNEK…NITP) and 134–158 (NDQVNSNTDNNNNTNNNNNTNNNKN). The Cytoplasmic segment spans residues 1-184 (MNEKKELQQE…KIRGWWWHRG (184 aa)). Composition is skewed to polar residues over residues 16–25 (FQTPKNQQLE) and 33–53 (EISSTGNETSESGISSPPISQ). Composition is skewed to low complexity over residues 54–65 (NDNSNNENESLN) and 138–156 (NSNTDNNNNTNNNNNTNNN). A helical membrane pass occupies residues 185–205 (ISTYIMLFYIALNIGVGVHMF). Topologically, residues 206-229 (YNMYHSDIFKFLGLSFCFSRTAAR) are extracellular. The region spanning 225–375 (RTAARLINLN…LFIPFYILLC (151 aa)) is the Ferric oxidoreductase domain. Residues 230–250 (LINLNSAVILLPVLRNFLSWL) form a helical membrane-spanning segment. Topologically, residues 251–269 (RGTIVNNYIPIDKHLNFHK) are cytoplasmic. Heme-binding residues include H268 and H282. Residues 270 to 290 (LCAFMLFCCTIIHCVGHYISF) form a helical membrane-spanning segment. The Extracellular portion of the chain corresponds to 291–324 (KKINDDVLKIDDGKSVAGDYLNININNFPDEKYL). The helical transmembrane segment at 325–345 (FFKSVPGITGHIMLLILILIV) threads the bilayer. At 346–355 (SSSMWRIRRP) the chain is on the cytoplasmic side. Residues 356-376 (MFEIFWYVHHLFIPFYILLCF) traverse the membrane as a helical segment. H364 and H377 together coordinate heme. Topologically, residues 377-388 (HGYSKILKKDPQ) are extracellular. Residues 389 to 409 (SWMWIIAPFILYSIERLIRIA) traverse the membrane as a helical segment. The region spanning 404 to 528 (RLIRIARSKK…DGPFGAPAEN (125 aa)) is the FAD-binding FR-type domain. Residues 410–698 (RSKKRVILEK…CHLIFHKENF (289 aa)) are Cytoplasmic-facing. 460-466 (HPFTITS) provides a ligand contact to FAD.

In terms of assembly, composed of a heavy chain and a light chain. Requires FAD as cofactor.

It localises to the membrane. Functionally, critical component of the membrane-bound oxidase that generates superoxide. It is the terminal component of a respiratory chain that transfers single electrons from cytoplasmic NADPH across the plasma membrane to molecular oxygen on the exterior. The polypeptide is Superoxide-generating NADPH oxidase heavy chain subunit B (noxB) (Dictyostelium discoideum (Social amoeba)).